The chain runs to 164 residues: FMN reductase (NADH) RutF (164 aa).

This sequence belongs to the non-flavoprotein flavin reductase family. RutF subfamily.

It catalyses the reaction FMNH2 + NAD(+) = FMN + NADH + 2 H(+). Functionally, catalyzes the reduction of FMN to FMNH2 which is used to reduce pyrimidine by RutA via the Rut pathway. The sequence is that of FMN reductase (NADH) RutF from Shigella flexneri serotype X (strain 2002017).